Consider the following 367-residue polypeptide: DNA replication and repair protein RecF (367 aa).

Glycine 30–threonine 37 is an ATP binding site.

It belongs to the RecF family.

It localises to the cytoplasm. The RecF protein is involved in DNA metabolism; it is required for DNA replication and normal SOS inducibility. RecF binds preferentially to single-stranded, linear DNA. It also seems to bind ATP. In Pseudomonas fluorescens (strain SBW25), this protein is DNA replication and repair protein RecF.